The chain runs to 457 residues: Dihydrolipoyl dehydrogenase (457 aa).

FAD is bound by residues 32 to 40, Lys49, and Ala113; that span reads EKQYFGGVC. Cys40 and Cys45 are disulfide-bonded. NAD(+) contacts are provided by residues 178 to 182, Val235, and 262 to 265; these read GGGVI and SIGR. The FAD site is built by Asp303 and Ala311. His437 acts as the Proton acceptor in catalysis.

Belongs to the class-I pyridine nucleotide-disulfide oxidoreductase family. In terms of assembly, homodimer. It depends on FAD as a cofactor.

Its subcellular location is the cytoplasm. It carries out the reaction N(6)-[(R)-dihydrolipoyl]-L-lysyl-[protein] + NAD(+) = N(6)-[(R)-lipoyl]-L-lysyl-[protein] + NADH + H(+). Its function is as follows. Lipoamide dehydrogenase is a component of the alpha-ketoacid dehydrogenase complexes. The chain is Dihydrolipoyl dehydrogenase (pdhD) from Mycoplasma genitalium (strain ATCC 33530 / DSM 19775 / NCTC 10195 / G37) (Mycoplasmoides genitalium).